A 325-amino-acid polypeptide reads, in one-letter code: RNA ligase 1 (325 aa).

Mg(2+) is required as a cofactor. Mn(2+) serves as cofactor. AMPylates itself (auto-AMPylation).

It catalyses the reaction ATP + (ribonucleotide)n-3'-hydroxyl + 5'-phospho-(ribonucleotide)m = (ribonucleotide)n+m + AMP + diphosphate.. Functionally, functions as an RNA ligase, in vitro. The ligation reaction entails three nucleotidyl transfer steps. In the first step, the RNA ligase reacts with ATP in the absence of nucleic acid to form a covalent ligase-AMP intermediate and release pyrophosphate. In step 2, the ligase-AMP binds to the nucleic acid and transfers the adenylate to the 5'-PO4 terminus to form an adenylylated intermediate. In step 3, the RNA ligase directs the attack of the 3'-OH on the 5'-phosphoanhydride linkage, resulting in a repaired 3'-5' phosphodiester and release of AMP. Exhibits selectivity for single-stranded RNA substrates and may not have nick-sealing activity on double-stranded DNA-RNA hybrids. May play a role in maintaining RNA integrity under stress conditions, for example in response to reactive oxygen species (ROS). This is RNA ligase 1 from Pongo abelii (Sumatran orangutan).